The primary structure comprises 445 residues: Ribosomal protein uS12 methylthiotransferase RimO (445 aa).

One can recognise an MTTase N-terminal domain in the interval 4-119; the sequence is YKVGMVSLGC…INEAIMNFIN (116 aa). 6 residues coordinate [4Fe-4S] cluster: C13, C48, C82, C157, C161, and C164. A Radical SAM core domain is found at 143–373; it reads TTDKATAYLR…MLLQKELSEE (231 aa). Positions 376-441 constitute a TRAM domain; the sequence is KNKLGREYDV…EYDLVGVVCN (66 aa).

It belongs to the methylthiotransferase family. RimO subfamily. Requires [4Fe-4S] cluster as cofactor.

It localises to the cytoplasm. The catalysed reaction is L-aspartate(89)-[ribosomal protein uS12]-hydrogen + (sulfur carrier)-SH + AH2 + 2 S-adenosyl-L-methionine = 3-methylsulfanyl-L-aspartate(89)-[ribosomal protein uS12]-hydrogen + (sulfur carrier)-H + 5'-deoxyadenosine + L-methionine + A + S-adenosyl-L-homocysteine + 2 H(+). Catalyzes the methylthiolation of an aspartic acid residue of ribosomal protein uS12. This Clostridium perfringens (strain SM101 / Type A) protein is Ribosomal protein uS12 methylthiotransferase RimO.